Consider the following 359-residue polypeptide: MKAPTQNDPQTRRPAAFTLETEEAARPSATQKRAPRSFDAEISLTPDEDDPFLAPADIDAAALPVATPKKSRFSFGKLGLGALGVLFSLAFGLWADQLIRNLFSRSDWLGYTATIALIVALFAVLALVGREVFGIMRLNAVQSLKADAETASLDKSPKPARAIVTRLNAVLSHRAETAKGRAALKETENDVIDGPHLIELAERELLVPLDRQARALILNSSKRVSVVTAVSPRAVVDLAYVLFEVTRLVRAMAELYGGRPGTLGMLKLLRDVVAHLAVTGSIAVGDGLAQQVLGHGLASKLSARLGEGVINGLMTARIGIAAMDLCRPLPFRAVKRPGIGDFMSDLTPDLSGGKNGEKA.

The tract at residues 1–39 is disordered; sequence MKAPTQNDPQTRRPAAFTLETEEAARPSATQKRAPRSFD. The next 2 helical transmembrane spans lie at 75 to 95 and 108 to 128; these read FGKL…GLWA and WLGY…LALV.

Belongs to the UPF0283 family.

It is found in the cell inner membrane. In Agrobacterium fabrum (strain C58 / ATCC 33970) (Agrobacterium tumefaciens (strain C58)), this protein is UPF0283 membrane protein Atu1356.